A 108-amino-acid polypeptide reads, in one-letter code: Movement protein TGB2 (108 aa).

The Cytoplasmic segment spans residues 1–8; that stretch reads MPLTPPPD. A helical membrane pass occupies residues 9–29; it reads YTKPFIAVVVGGTLAAFVLLL. Over 30–71 the chain is Lumenal; that stretch reads TRNTLPHTGDNLHSLPHGGTYCDGTKRIRYGGPHRSHVPELP. Residues 72 to 92 form a helical membrane-spanning segment; sequence AKSWALITVVAILIALHFSCL. Topologically, residues 93 to 108 are cytoplasmic; sequence RTHRVHRCVLCHTTSG.

This sequence belongs to the Tymovirales TGBp2 protein family.

The protein localises to the host endoplasmic reticulum membrane. In terms of biological role, plays a role in viral cell-to-cell propagation, by facilitating genome transport to neighboring plant cells through plasmosdesmata,. This is Movement protein TGB2 from Lily virus X.